Reading from the N-terminus, the 422-residue chain is Serine--tRNA ligase (422 aa).

227–229 (TSE) contributes to the L-serine binding site. ATP contacts are provided by residues 258–260 (RRE) and Val274. Glu281 is a binding site for L-serine. Residue 345 to 348 (ELTS) participates in ATP binding. Thr380 serves as a coordination point for L-serine.

This sequence belongs to the class-II aminoacyl-tRNA synthetase family. Type-1 seryl-tRNA synthetase subfamily. Homodimer. The tRNA molecule binds across the dimer.

It localises to the cytoplasm. It catalyses the reaction tRNA(Ser) + L-serine + ATP = L-seryl-tRNA(Ser) + AMP + diphosphate + H(+). It carries out the reaction tRNA(Sec) + L-serine + ATP = L-seryl-tRNA(Sec) + AMP + diphosphate + H(+). The protein operates within aminoacyl-tRNA biosynthesis; selenocysteinyl-tRNA(Sec) biosynthesis; L-seryl-tRNA(Sec) from L-serine and tRNA(Sec): step 1/1. Its function is as follows. Catalyzes the attachment of serine to tRNA(Ser). Is also able to aminoacylate tRNA(Sec) with serine, to form the misacylated tRNA L-seryl-tRNA(Sec), which will be further converted into selenocysteinyl-tRNA(Sec). In Thermobifida fusca (strain YX), this protein is Serine--tRNA ligase.